The sequence spans 457 residues: BAG family molecular chaperone regulator 4 (457 aa).

Residues 1-101 are disordered; sequence MSALRRSGYG…QPPYPSYNSN (101 aa). Serine 7 bears the Phosphoserine mark. Over residues 8–20 the composition is skewed to low complexity; the sequence is GYGPSDGPSYGRY. Pro residues predominate over residues 30–47; sequence VHPPPPLYPLRPEPPQPP. Omega-N-methylarginine is present on residues arginine 40, arginine 53, and arginine 108. Disordered regions lie at residues 113-136, 166-333, and 347-377; these read YPST…NGAY, STEV…DDSD, and LYGN…ESTP. Polar residues predominate over residues 166 to 182; it reads STEVPSTYRSSGNSPTP. Omega-N-methylarginine is present on arginine 185. Composition is skewed to low complexity over residues 274–284 and 294–308; these read STSPWPSSGSP and QPKD…SDQS. 2 stretches are compositionally biased toward polar residues: residues 320-333 and 347-365; these read QYES…DDSD and LYGN…SSSL. The BAG domain maps to 379-456; that stretch reads SIKKIIHVLE…AILEKLEKKG (78 aa).

As to quaternary structure, binds to the ATPase domain of HSP/HSC70 chaperones. Binds to the death domain of TNFRSF1A in the absence of TNF and thereby prevents binding of adapter molecules such as TRADD or TRAF2. Binds to the death domain of TNFRSF12. Interacts with PRKN. Ubiquitous.

Its subcellular location is the cytoplasm. Its function is as follows. Inhibits the chaperone activity of HSP70/HSC70 by promoting substrate release. Prevents constitutive TNFRSF1A signaling. Negative regulator of PRKN translocation to damaged mitochondria. The protein is BAG family molecular chaperone regulator 4 (BAG4) of Homo sapiens (Human).